Here is a 445-residue protein sequence, read N- to C-terminus: Phosphoglucosamine mutase (445 aa).

Ser-102 acts as the Phosphoserine intermediate in catalysis. Residues Ser-102, Asp-241, Asp-243, and Asp-245 each coordinate Mg(2+). Ser-102 carries the phosphoserine modification.

It belongs to the phosphohexose mutase family. The cofactor is Mg(2+). Activated by phosphorylation.

It carries out the reaction alpha-D-glucosamine 1-phosphate = D-glucosamine 6-phosphate. Functionally, catalyzes the conversion of glucosamine-6-phosphate to glucosamine-1-phosphate. In Photorhabdus laumondii subsp. laumondii (strain DSM 15139 / CIP 105565 / TT01) (Photorhabdus luminescens subsp. laumondii), this protein is Phosphoglucosamine mutase.